Consider the following 124-residue polypeptide: Small ribosomal subunit protein eS6 (124 aa).

This sequence belongs to the eukaryotic ribosomal protein eS6 family.

This Methanococcus maripaludis (strain DSM 14266 / JCM 13030 / NBRC 101832 / S2 / LL) protein is Small ribosomal subunit protein eS6.